The chain runs to 240 residues: Serine protease SplB (240 aa).

The first 36 residues, 1–36, serve as a signal peptide directing secretion; it reads MNKNVVIKSLATLTILTSVAGIGTTLVEEVQQTAKA. Active-site charge relay system residues include histidine 75, aspartate 113, and serine 193.

This sequence belongs to the peptidase S1B family.

It is found in the secreted. Its function is as follows. Serine protease that cleaves specifically after the sequence Trp-Glu-Leu-Gln. This Staphylococcus aureus (strain bovine RF122 / ET3-1) protein is Serine protease SplB (splB).